The sequence spans 900 residues: Alanine--tRNA ligase (900 aa).

His-604, His-608, Cys-708, and His-712 together coordinate Zn(2+).

Belongs to the class-II aminoacyl-tRNA synthetase family. The cofactor is Zn(2+).

It localises to the cytoplasm. It carries out the reaction tRNA(Ala) + L-alanine + ATP = L-alanyl-tRNA(Ala) + AMP + diphosphate. In terms of biological role, catalyzes the attachment of alanine to tRNA(Ala) in a two-step reaction: alanine is first activated by ATP to form Ala-AMP and then transferred to the acceptor end of tRNA(Ala). Also edits incorrectly charged Ser-tRNA(Ala) and Gly-tRNA(Ala) via its editing domain. This is Alanine--tRNA ligase from Saccharolobus islandicus (strain M.16.27) (Sulfolobus islandicus).